We begin with the raw amino-acid sequence, 142 residues long: Tol-Pal system protein TolR (142 aa).

Over 1–17 (MARARGRGRRDLKSEIN) the chain is Cytoplasmic. A helical transmembrane segment spans residues 18–38 (IVPLLDVLLVLLLIFMATAPI). Over 39–142 (ITQSVEVDLP…KSVGLMTQPI (104 aa)) the chain is Periplasmic.

This sequence belongs to the ExbD/TolR family. As to quaternary structure, the Tol-Pal system is composed of five core proteins: the inner membrane proteins TolA, TolQ and TolR, the periplasmic protein TolB and the outer membrane protein Pal. They form a network linking the inner and outer membranes and the peptidoglycan layer.

It is found in the cell inner membrane. In terms of biological role, part of the Tol-Pal system, which plays a role in outer membrane invagination during cell division and is important for maintaining outer membrane integrity. Required, with TolQ, for the proton motive force-dependent activation of TolA and for TolA-Pal interaction. The protein is Tol-Pal system protein TolR of Escherichia coli O157:H7.